Here is a 251-residue protein sequence, read N- to C-terminus: Fibroblast growth factor 23 (251 aa).

Residues 1–24 (MLGACLRLLVGALCTVCSLGTARA) form the signal peptide. C95 and C113 are oxidised to a cystine. Residues T171 and T178 are each glycosylated (O-linked (GalNAc) threonine). Residues 175–251 (RRHTRSAEDP…DRCRPFPRFV (77 aa)) form a disordered region. Residues 179–189 (RSAEDPPERDP) show a composition bias toward basic and acidic residues. A Phosphoserine; by FAM20C modification is found at S180.

This sequence belongs to the heparin-binding growth factors family. In terms of assembly, interacts with FGFR1, FGFR2, FGFR3 and FGFR4. Affinity between fibroblast growth factors (FGFs) and their receptors is increased by KL and heparan sulfate glycosaminoglycans that function as coreceptors. Post-translationally, following secretion this protein is inactivated by cleavage into a N-terminal fragment and a C-terminal fragment. The processing is effected by proprotein convertases. O-glycosylated at Thr-171 and Thr-178 by GALNT3 and glycosylation of Thr-178 requires previous glycosylation at Thr171. Glycosylation is necessary for secretion; it blocks processing by proprotein convertases when the O-glycan is alpha 2,6-sialylated. Competition between proprotein convertase cleavage and block of cleavage by O-glycosylation determines the level of secreted active FGF23. In terms of processing, phosphorylation at Ser-180 mediated by FAM20C slows down glycosylation at Thr-178 notably. As to expression, expressed in the parathyroid.

The protein localises to the secreted. Its function is as follows. Regulator of phosphate homeostasis. Inhibits renal tubular phosphate transport by reducing SLC34A1 levels. Regulator of vitamin-D metabolism. Negatively regulates osteoblasts differentiation and matrix mineralization. Acts directly on the parathyroid to decrease PTH secretion. Up-regulates EGR1 expression in the presence of KL. The polypeptide is Fibroblast growth factor 23 (Fgf23) (Rattus norvegicus (Rat)).